The primary structure comprises 1271 residues: Breakpoint cluster region protein (1271 aa).

N-acetylmethionine is present on M1. Residues 1–426 are kinase; it reads MVDPVGFAEA…DGEGAFHGDA (426 aa). Positions 28–55 form a coiled coil; that stretch reads VGDIEQELERCKASIRRLEQEVNQERFR. Positions 67–173 are disordered; sequence KKSYDRQRWG…GHGQPGADAE (107 aa). Over residues 87–105 the composition is skewed to low complexity; it reads ASEPRASASRPQPAPADGA. Residue S122 is modified to Phosphoserine. The segment covering 123 to 138 has biased composition (low complexity); it reads PGKARPGTARRPGAAA. Position 139 is a phosphoserine (S139). Y177 carries the post-translational modification Phosphotyrosine; by HCK. The span at 185–198 shows a compositional bias: basic and acidic residues; it reads ERGLVKVNDKEVSD. 3 disordered regions span residues 185 to 247, 286 to 392, and 416 to 476; these read ERGL…GDYE, GMME…HKRH, and NDGE…SRDA. Residues 197 to 385 are binding to ABL SH2-domain; the sequence is SDRISSLGSQ…QSFDSSSPPT (189 aa). Positions 199–208 are enriched in polar residues; sequence RISSLGSQAM. A phosphoserine mark is found at S202, S215, S222, and S236. Y246 is modified (phosphotyrosine; by FES). 2 stretches are compositionally biased toward low complexity: residues 346–356 and 369–382; these read SSGQSSRVSPS and SPSQNSQQSFDSSS. Phosphoserine is present on residues S356, S377, and S382. T385 carries the phosphothreonine modification. Basic and acidic residues predominate over residues 441–451; it reads DRAEEQRRHQD. 2 positions are modified to phosphoserine: S459 and S463. An Omega-N-methylarginine modification is found at R471. Phosphoserine is present on residues S473 and S488. In terms of domain architecture, DH spans 498–691; the sequence is MRKWVLSGIL…QNFLSSINEE (194 aa). At Y554 the chain carries Phosphotyrosine. T641 bears the Phosphothreonine mark. The residue at position 644 (Y644) is a Phosphotyrosine. T693 carries the phosphothreonine modification. One can recognise a PH domain in the interval 708–866; that stretch reads QLLKDSFMVE…WRENIREQQK (159 aa). One can recognise a C2 domain in the interval 893-1020; it reads HSIPLTINKE…QDRDWQRTVI (128 aa). S894 is modified (phosphoserine). Residues 1054-1248 form the Rho-GAP domain; that stretch reads VKIAVVTKRE…VMSQVQVLLY (195 aa). S1264 bears the Phosphoserine mark.

As to quaternary structure, homotetramer. Interacts with PDZK1. May interact with CCPG1. Interacts with FES/FPS, ABL1, PIK3R1 and GRB2. Interacts with HCK. Interacts with SH2D5. Interacts with DLG4. Post-translationally, autophosphorylated. Phosphorylated by FES/FPS on tyrosine residues, leading to down-regulation of the BCR kinase activity. Phosphorylation at Tyr-177 by HCK is important for interaction with GRB2.

The protein localises to the postsynaptic density. The protein resides in the cell projection. It is found in the dendritic spine. It localises to the axon. Its subcellular location is the synapse. It catalyses the reaction L-seryl-[protein] + ATP = O-phospho-L-seryl-[protein] + ADP + H(+). The enzyme catalyses L-threonyl-[protein] + ATP = O-phospho-L-threonyl-[protein] + ADP + H(+). Protein with a unique structure having two opposing regulatory activities toward small GTP-binding proteins. The C-terminus is a GTPase-activating protein (GAP) domain which stimulates GTP hydrolysis by RAC1, RAC2 and CDC42. Accelerates the intrinsic rate of GTP hydrolysis of RAC1 or CDC42, leading to down-regulation of the active GTP-bound form. The central Dbl homology (DH) domain functions as guanine nucleotide exchange factor (GEF) that modulates the GTPases CDC42, RHOA and RAC1. Promotes the conversion of CDC42, RHOA and RAC1 from the GDP-bound to the GTP-bound form. The amino terminus contains an intrinsic kinase activity. Functions as an important negative regulator of neuronal RAC1 activity. Regulates macrophage functions such as CSF1-directed motility and phagocytosis through the modulation of RAC1 activity. Plays a major role as a RHOA GEF in keratinocytes being involved in focal adhesion formation and keratinocyte differentiation. This is Breakpoint cluster region protein from Homo sapiens (Human).